Consider the following 500-residue polypeptide: NAD(P)H-quinone oxidoreductase chain 4, chloroplastic (500 aa).

The next 14 helical transmembrane spans lie at 4-24, 35-55, 87-107, 113-130, 134-154, 167-187, 207-227, 242-262, 272-292, 305-325, 330-350, 386-406, 416-436, and 462-482; these read FPWLTIIVVLPIFAGSLIFFL, YTICICMLELLLTTYAFCYHF, LGPVLLTGFITTLATLAAWPV, LFHFLMLAMYSGQIGSFS, LLLFFIMWELELIPVYLLLSM, FILYTAGGSIFLLMGVLGVGL, VALEIIFYIGFLIAFAVKLPI, HYSTCMLLAGILLKMGAYGLI, AHSIFSPWLMVVGTIQIIYAA, IAYSSVSHMGFILIGIASITD, GAILQIISHGFIGAALFFLAG, LALPGMSGFVAEVLVFLGIIT, IAITFVMAIGMILTPIYLLSM, and LFVSISIFIPVIGIGMYPDFV.

It belongs to the complex I subunit 4 family.

It is found in the plastid. Its subcellular location is the chloroplast thylakoid membrane. The catalysed reaction is a plastoquinone + NADH + (n+1) H(+)(in) = a plastoquinol + NAD(+) + n H(+)(out). It catalyses the reaction a plastoquinone + NADPH + (n+1) H(+)(in) = a plastoquinol + NADP(+) + n H(+)(out). In Helianthus annuus (Common sunflower), this protein is NAD(P)H-quinone oxidoreductase chain 4, chloroplastic.